A 157-amino-acid polypeptide reads, in one-letter code: Probable succinate transporter subunit YjjB (157 aa).

4 consecutive transmembrane segments (helical) span residues 15–35 (ILAAIPAVGFAMVFNVPVQAL), 50–70 (MILMTSGLNIEWSTFMASMLV), 87–107 (VFTVAAVIPMFPGISAYTAMI), and 121–141 (LMITLLTNFLTASSIVGALSV).

Belongs to the ThrE exporter (TC 2.A.79) family. As to quaternary structure, the transporter is composed of YjjB and YjjP.

The protein resides in the cell inner membrane. Involved in succinate export with YjjP. Both proteins are required for export. This Shigella dysenteriae serotype 1 (strain Sd197) protein is Probable succinate transporter subunit YjjB.